A 150-amino-acid polypeptide reads, in one-letter code: Ankyrin repeat protein C18/B24 (150 aa).

The stretch at 41 to 73 is one ANK repeat; the sequence is ENKTLLYYAVDVNNIQFAKRLLEYGASVTTSRS.

The polypeptide is Ankyrin repeat protein C18/B24 (Vaccinia virus (strain Copenhagen) (VACV)).